Consider the following 185-residue polypeptide: MISSNDLRPGVSVEIDGAPYKVIEFLHVKPGKGAAFVRTKLKNMQTGNVVEKTFRAGEMLPAATIEKVNMQYLYSEGDNFVFMDMETYEQAPLSAAQIGSAVKYLKENMEVAILRWKGQVIDVELPNTVVLEVVETDPGVRGDTATGGTKPAKLETGAEIQVPLFIKVGERVRVDTRTDTYIGRE.

The protein belongs to the elongation factor P family.

The protein localises to the cytoplasm. The protein operates within protein biosynthesis; polypeptide chain elongation. Its function is as follows. Involved in peptide bond synthesis. Stimulates efficient translation and peptide-bond synthesis on native or reconstituted 70S ribosomes in vitro. Probably functions indirectly by altering the affinity of the ribosome for aminoacyl-tRNA, thus increasing their reactivity as acceptors for peptidyl transferase. The protein is Elongation factor P of Synechococcus sp. (strain JA-3-3Ab) (Cyanobacteria bacterium Yellowstone A-Prime).